The chain runs to 416 residues: Glutamate dehydrogenase (416 aa).

Residue lysine 105 is part of the active site.

It belongs to the Glu/Leu/Phe/Val dehydrogenases family. Homohexamer.

It carries out the reaction L-glutamate + NAD(+) + H2O = 2-oxoglutarate + NH4(+) + NADH + H(+). The catalysed reaction is L-glutamate + NADP(+) + H2O = 2-oxoglutarate + NH4(+) + NADPH + H(+). In Thermotoga maritima (strain ATCC 43589 / DSM 3109 / JCM 10099 / NBRC 100826 / MSB8), this protein is Glutamate dehydrogenase (gdhA).